We begin with the raw amino-acid sequence, 391 residues long: Succinate--CoA ligase [ADP-forming] subunit beta (391 aa).

The ATP-grasp domain occupies 9 to 248 (KDILRKFGVS…TGEEDPFEVE (240 aa)). ATP-binding positions include K50, 57–59 (GRG), E103, M106, and E111. N203 and D217 together coordinate Mg(2+). Residues N268 and 325-327 (GIV) contribute to the substrate site.

This sequence belongs to the succinate/malate CoA ligase beta subunit family. In terms of assembly, heterotetramer of two alpha and two beta subunits. Mg(2+) serves as cofactor.

The enzyme catalyses succinate + ATP + CoA = succinyl-CoA + ADP + phosphate. It catalyses the reaction GTP + succinate + CoA = succinyl-CoA + GDP + phosphate. It functions in the pathway carbohydrate metabolism; tricarboxylic acid cycle; succinate from succinyl-CoA (ligase route): step 1/1. Succinyl-CoA synthetase functions in the citric acid cycle (TCA), coupling the hydrolysis of succinyl-CoA to the synthesis of either ATP or GTP and thus represents the only step of substrate-level phosphorylation in the TCA. The beta subunit provides nucleotide specificity of the enzyme and binds the substrate succinate, while the binding sites for coenzyme A and phosphate are found in the alpha subunit. This chain is Succinate--CoA ligase [ADP-forming] subunit beta, found in Chlorobium phaeobacteroides (strain BS1).